The primary structure comprises 614 residues: UvrABC system protein C (614 aa).

The GIY-YIG domain occupies 14-91; the sequence is TSPGCYIHKD…IKENKPKYNI (78 aa). Positions 196-231 constitute a UVR domain; sequence DKIIDDLKSKMAVAAQSMEFERAAEYRDLIQAIGTL. Residues 595 to 614 are disordered; it reads LSQVAEERVDYQTEGNHNEP. The segment covering 599 to 614 has biased composition (basic and acidic residues); that stretch reads AEERVDYQTEGNHNEP.

This sequence belongs to the UvrC family. In terms of assembly, interacts with UvrB in an incision complex.

The protein resides in the cytoplasm. In terms of biological role, the UvrABC repair system catalyzes the recognition and processing of DNA lesions. UvrC both incises the 5' and 3' sides of the lesion. The N-terminal half is responsible for the 3' incision and the C-terminal half is responsible for the 5' incision. The polypeptide is UvrABC system protein C (Streptococcus pneumoniae serotype 2 (strain D39 / NCTC 7466)).